A 284-amino-acid chain; its full sequence is NAD kinase (284 aa).

Residue Asp-67 is the Proton acceptor of the active site. NAD(+) is bound by residues 67-68 (DG), 141-142 (ND), Arg-152, Lys-169, Asp-171, 182-187 (TGYSLS), and Gln-241.

Belongs to the NAD kinase family. It depends on a divalent metal cation as a cofactor.

Its subcellular location is the cytoplasm. The enzyme catalyses NAD(+) + ATP = ADP + NADP(+) + H(+). Involved in the regulation of the intracellular balance of NAD and NADP, and is a key enzyme in the biosynthesis of NADP. Catalyzes specifically the phosphorylation on 2'-hydroxyl of the adenosine moiety of NAD to yield NADP. This is NAD kinase from Geotalea daltonii (strain DSM 22248 / JCM 15807 / FRC-32) (Geobacter daltonii).